Consider the following 451-residue polypeptide: Signal recognition particle protein (451 aa).

GTP contacts are provided by residues 107 to 114 (GLQGSGKT), 190 to 194 (DTAGR), and 248 to 251 (TKTD).

It belongs to the GTP-binding SRP family. SRP54 subfamily. As to quaternary structure, part of the signal recognition particle protein translocation system, which is composed of SRP and FtsY. SRP is a ribonucleoprotein composed of Ffh and a 4.5S RNA molecule.

Its subcellular location is the cytoplasm. The enzyme catalyses GTP + H2O = GDP + phosphate + H(+). Involved in targeting and insertion of nascent membrane proteins into the cytoplasmic membrane. Binds to the hydrophobic signal sequence of the ribosome-nascent chain (RNC) as it emerges from the ribosomes. The SRP-RNC complex is then targeted to the cytoplasmic membrane where it interacts with the SRP receptor FtsY. Interaction with FtsY leads to the transfer of the RNC complex to the Sec translocase for insertion into the membrane, the hydrolysis of GTP by both Ffh and FtsY, and the dissociation of the SRP-FtsY complex into the individual components. This is Signal recognition particle protein from Buchnera aphidicola subsp. Acyrthosiphon pisum (strain APS) (Acyrthosiphon pisum symbiotic bacterium).